Here is a 161-residue protein sequence, read N- to C-terminus: Short form salivary protein D7S (161 aa).

An N-terminal signal peptide occupies residues 1 to 18 (MKFPSILLAILLFKPITA). Disulfide bonds link Cys33-Cys67, Cys47-Cys155, and Cys109-Cys125.

The protein belongs to the PBP/GOBP family.

The protein resides in the secreted. Functionally, in contrast to the related D7 salivary proteins, does not bind serotonin. The polypeptide is Short form salivary protein D7S (Culex quinquefasciatus (Southern house mosquito)).